The sequence spans 293 residues: Pyridoxal 5'-phosphate synthase subunit PdxS (293 aa).

Residue aspartate 23 coordinates D-ribose 5-phosphate. Residue lysine 80 is the Schiff-base intermediate with D-ribose 5-phosphate of the active site. Residue glycine 152 participates in D-ribose 5-phosphate binding. Arginine 164 provides a ligand contact to D-glyceraldehyde 3-phosphate. D-ribose 5-phosphate is bound by residues glycine 213 and 234–235 (GS).

This sequence belongs to the PdxS/SNZ family. As to quaternary structure, in the presence of PdxT, forms a dodecamer of heterodimers.

The enzyme catalyses aldehydo-D-ribose 5-phosphate + D-glyceraldehyde 3-phosphate + L-glutamine = pyridoxal 5'-phosphate + L-glutamate + phosphate + 3 H2O + H(+). It participates in cofactor biosynthesis; pyridoxal 5'-phosphate biosynthesis. Catalyzes the formation of pyridoxal 5'-phosphate from ribose 5-phosphate (RBP), glyceraldehyde 3-phosphate (G3P) and ammonia. The ammonia is provided by the PdxT subunit. Can also use ribulose 5-phosphate and dihydroxyacetone phosphate as substrates, resulting from enzyme-catalyzed isomerization of RBP and G3P, respectively. The chain is Pyridoxal 5'-phosphate synthase subunit PdxS from Roseiflexus castenholzii (strain DSM 13941 / HLO8).